Reading from the N-terminus, the 207-residue chain is NADH-quinone oxidoreductase subunit A (207 aa).

3 helical membrane passes run 6-26 (WSAIAFILAAIALVVFMLVVP), 62-82 (LVAIFFVIFDLEALYLYAYAV), and 87-107 (AGWLGFAAAAIFITILIIGLV).

It belongs to the complex I subunit 3 family. NDH-1 is composed of 14 different subunits. Subunits NuoA, H, J, K, L, M, N constitute the membrane sector of the complex.

Its subcellular location is the cell inner membrane. It carries out the reaction a quinone + NADH + 5 H(+)(in) = a quinol + NAD(+) + 4 H(+)(out). NDH-1 shuttles electrons from NADH, via FMN and iron-sulfur (Fe-S) centers, to quinones in the respiratory chain. The immediate electron acceptor for the enzyme in this species is believed to be ubiquinone. Couples the redox reaction to proton translocation (for every two electrons transferred, four hydrogen ions are translocated across the cytoplasmic membrane), and thus conserves the redox energy in a proton gradient. This is NADH-quinone oxidoreductase subunit A from Psychrobacter arcticus (strain DSM 17307 / VKM B-2377 / 273-4).